A 132-amino-acid chain; its full sequence is Small ribosomal subunit protein uS8 (132 aa).

This sequence belongs to the universal ribosomal protein uS8 family. As to quaternary structure, part of the 30S ribosomal subunit. Contacts proteins S5 and S12.

Functionally, one of the primary rRNA binding proteins, it binds directly to 16S rRNA central domain where it helps coordinate assembly of the platform of the 30S subunit. The sequence is that of Small ribosomal subunit protein uS8 from Clostridium acetobutylicum (strain ATCC 824 / DSM 792 / JCM 1419 / IAM 19013 / LMG 5710 / NBRC 13948 / NRRL B-527 / VKM B-1787 / 2291 / W).